A 291-amino-acid polypeptide reads, in one-letter code: Small ribosomal subunit protein uS2 (291 aa).

Residues 241-270 (KREPRQINRPVMSSENQAEQQTSVANENVQ) form a disordered region. Polar residues predominate over residues 251 to 270 (VMSSENQAEQQTSVANENVQ).

Belongs to the universal ribosomal protein uS2 family.

This chain is Small ribosomal subunit protein uS2, found in Mycoplasma capricolum subsp. capricolum (strain California kid / ATCC 27343 / NCTC 10154).